The sequence spans 309 residues: Mitochondrial import receptor subunit TOM34 (309 aa).

S8 carries the phosphoserine modification. TPR repeat units lie at residues 9 to 42 (VEEL…LQAQ), 51 to 84 (SVLY…VPFS), and 86 to 118 (KPLL…DDNV). S160 is subject to Phosphoserine. Residues 161-189 (LPSENHKEMAKSKSKETTATKNRVPSAGD) form a disordered region. A compositionally biased stretch (basic and acidic residues) spans 164 to 178 (ENHKEMAKSKSKETT). S186 is modified (phosphoserine). TPR repeat units follow at residues 193-226 (ARVL…SNLE), 227-260 (SATY…DGKN), and 262-294 (KAFY…EPRN). Residue K197 forms a Glycyl lysine isopeptide (Lys-Gly) (interchain with G-Cter in SUMO2) linkage.

Belongs to the Tom34 family. In terms of assembly, interacts with HSP90A, VCP, ATP6V1D, KIAA0665, AMPK, and DMAP1 through its TPR repeat. As to expression, ubiquitous.

It is found in the cytoplasm. It localises to the mitochondrion outer membrane. Functionally, plays a role in the import of cytosolically synthesized preproteins into mitochondria. Binds the mature portion of precursor proteins. Interacts with cellular components, and possesses weak ATPase activity. May be a chaperone-like protein that helps to keep newly synthesized precursors in an unfolded import compatible state. The chain is Mitochondrial import receptor subunit TOM34 (TOMM34) from Homo sapiens (Human).